We begin with the raw amino-acid sequence, 284 residues long: Probable O-methyltransferase ustE (284 aa).

N-linked (GlcNAc...) asparagine glycans are attached at residues N22 and N29. 2 consecutive transmembrane segments (helical) span residues 88 to 108 (LLLL…VLTV) and 157 to 177 (YLAT…VCEI). N-linked (GlcNAc...) asparagine glycosylation occurs at N205. The helical transmembrane segment at 215-235 (GLALASGGMIYGMSIAMFFMW) threads the bilayer. The N-linked (GlcNAc...) asparagine glycan is linked to N264.

The protein belongs to the class VI-like SAM-binding methyltransferase superfamily. Isoprenylcysteine carboxyl methyltransferase family.

It is found in the membrane. The protein operates within secondary metabolite biosynthesis. Functionally, probable O-methyltransferase; part of the gene cluster that mediates the biosynthesis of ustilaginoidins, dimeric gamma-naphthopyrones isolated from different fungal species. The first step in the biosynthesis of ustilaginoidins is the production of gamma-naphthopyrone precursor YWA1 by the non-reducing polyketide synthase ustP, via condensation of one acetyl-CoA starter unit with 6 malonyl-CoA units. YWA1 is then probably substrate of the ustZ to yield norrubrofusarin via a dehydration reaction. A key enzyme in the biosynthetic pathway is the laccase ustL, which catalyzes the oxidative dimerization of norrubrofusarin to ustilaginoidin A. It can produce the M- and P-atropisomers in varying amounts, depending on the reaction conditions. For the biosynthesis of 3-methylustilaginoid in derivatives such as chaetochromin A, a methylated derivative of YWA1 is required. The C-methylation is considered to be catalyzed by ustM, the phosphopantetheine attachment site of which indicates that it acts on the growing polyketide chain before release of the product. For the biosynthesis of chaetochromin A, it is assumed that saturation of the D2 double bond takes place before dimerization, and is probably catalyzed by an external reductase because no candidate gene was identified within the cluster. The polypeptide is Probable O-methyltransferase ustE (Ustilaginoidea virens (Rice false smut fungus)).